Reading from the N-terminus, the 157-residue chain is 2-C-methyl-D-erythritol 2,4-cyclodiphosphate synthase (157 aa).

A divalent metal cation is bound by residues aspartate 8 and histidine 10. 4-CDP-2-C-methyl-D-erythritol 2-phosphate is bound by residues 8–10 (DVH) and 34–35 (HS). Histidine 42 provides a ligand contact to a divalent metal cation. 4-CDP-2-C-methyl-D-erythritol 2-phosphate-binding positions include 56-58 (DIG), 132-135 (TTNE), and arginine 142.

This sequence belongs to the IspF family. In terms of assembly, homotrimer. Requires a divalent metal cation as cofactor.

It carries out the reaction 4-CDP-2-C-methyl-D-erythritol 2-phosphate = 2-C-methyl-D-erythritol 2,4-cyclic diphosphate + CMP. It functions in the pathway isoprenoid biosynthesis; isopentenyl diphosphate biosynthesis via DXP pathway; isopentenyl diphosphate from 1-deoxy-D-xylulose 5-phosphate: step 4/6. Its function is as follows. Involved in the biosynthesis of isopentenyl diphosphate (IPP) and dimethylallyl diphosphate (DMAPP), two major building blocks of isoprenoid compounds. Catalyzes the conversion of 4-diphosphocytidyl-2-C-methyl-D-erythritol 2-phosphate (CDP-ME2P) to 2-C-methyl-D-erythritol 2,4-cyclodiphosphate (ME-CPP) with a corresponding release of cytidine 5-monophosphate (CMP). The protein is 2-C-methyl-D-erythritol 2,4-cyclodiphosphate synthase of Pelodictyon phaeoclathratiforme (strain DSM 5477 / BU-1).